We begin with the raw amino-acid sequence, 395 residues long: Major capsid protein P3 (395 aa).

Homotrimer.

It is found in the virion. Functionally, major capsid protein self-assembles to form an icosahedral capsid with a pseudo T=25 symmetry, about 66 nm in diameter, and consisting of 240 capsid proteins trimers. The capsid encapsulates an inner membrane and the genomic dsDNA genome. The major coat protein P3 and two assembly factors (P10 and P17) are needed during the assembly of the virus particle inside the host cell, when the capsid protein multimers are capable of enclosing the host-derived membrane, containing the virus-encoded membrane-associated proteins. This chain is Major capsid protein P3 (III), found in Acinetobacter calcoaceticus (Arthrobacter siderocapsulatus).